Consider the following 73-residue polypeptide: NAD(P)H-quinone oxidoreductase subunit L (73 aa).

Transmembrane regions (helical) follow at residues 7-27 (LIGLTYAALAVLYLLVLPFLF) and 44-64 (VLMFFLVLFFFPGMVLVAPFM).

This sequence belongs to the complex I NdhL subunit family. In terms of assembly, NDH-1 can be composed of about 15 different subunits; different subcomplexes with different compositions have been identified which probably have different functions.

The protein resides in the cellular thylakoid membrane. The enzyme catalyses a plastoquinone + NADH + (n+1) H(+)(in) = a plastoquinol + NAD(+) + n H(+)(out). It catalyses the reaction a plastoquinone + NADPH + (n+1) H(+)(in) = a plastoquinol + NADP(+) + n H(+)(out). Its function is as follows. NDH-1 shuttles electrons from an unknown electron donor, via FMN and iron-sulfur (Fe-S) centers, to quinones in the respiratory and/or the photosynthetic chain. The immediate electron acceptor for the enzyme in this species is believed to be plastoquinone. Couples the redox reaction to proton translocation, and thus conserves the redox energy in a proton gradient. Cyanobacterial NDH-1 also plays a role in inorganic carbon-concentration. The polypeptide is NAD(P)H-quinone oxidoreductase subunit L (Synechococcus sp. (strain JA-3-3Ab) (Cyanobacteria bacterium Yellowstone A-Prime)).